The chain runs to 122 residues: Large ribosomal subunit protein uL14c (122 aa).

Belongs to the universal ribosomal protein uL14 family. In terms of assembly, part of the 50S ribosomal subunit.

It is found in the plastid. Functionally, binds to 23S rRNA. This is Large ribosomal subunit protein uL14c from Cuscuta obtusiflora (Peruvian dodder).